Here is a 539-residue protein sequence, read N- to C-terminus: Phosphoenolpyruvate carboxykinase (ATP) (539 aa).

Substrate contacts are provided by R64, Y206, and K212. ATP contacts are provided by residues K212, H231, and 247-255 (GLSGTGKTT). 2 residues coordinate Mn(2+): K212 and H231. Mn(2+) is bound at residue D268. ATP contacts are provided by residues E296, R332, 448 to 449 (RI), and T454. Substrate is bound at residue R332.

It belongs to the phosphoenolpyruvate carboxykinase (ATP) family. Monomer. Requires Mn(2+) as cofactor.

Its subcellular location is the cytoplasm. It carries out the reaction oxaloacetate + ATP = phosphoenolpyruvate + ADP + CO2. Its pathway is carbohydrate biosynthesis; gluconeogenesis. Functionally, involved in the gluconeogenesis. Catalyzes the conversion of oxaloacetate (OAA) to phosphoenolpyruvate (PEP) through direct phosphoryl transfer between the nucleoside triphosphate and OAA. The polypeptide is Phosphoenolpyruvate carboxykinase (ATP) (Hamiltonella defensa subsp. Acyrthosiphon pisum (strain 5AT)).